We begin with the raw amino-acid sequence, 273 residues long: Undecaprenyl-diphosphatase (273 aa).

Helical transmembrane passes span 13-35 (GLVE…VFGN), 45-62 (VFEI…VFEY), 82-102 (FVLN…LFDK), 108-128 (LFNP…ILWV), 186-206 (TEFS…YDVL), 219-239 (LILI…KALL), and 250-270 (FAYY…SGWI).

This sequence belongs to the UppP family.

The protein resides in the cell inner membrane. The catalysed reaction is di-trans,octa-cis-undecaprenyl diphosphate + H2O = di-trans,octa-cis-undecaprenyl phosphate + phosphate + H(+). In terms of biological role, catalyzes the dephosphorylation of undecaprenyl diphosphate (UPP). Confers resistance to bacitracin. This chain is Undecaprenyl-diphosphatase, found in Neisseria gonorrhoeae (strain NCCP11945).